Reading from the N-terminus, the 555-residue chain is MTTARPAKARNEGQWALGHREPLNANEELKKAGNPLDVRERIENIYAKQGFDSIDKTDLRGRFRWWGLYTQREQGYDGTWTGDDNIDKLEAKYFMMRVRCDGGALSAAALRTLGQISTEFARDTADISDRQNVQYHWIEVENVPEIWRRLDDVGLQTTEACGDCPRVVLGSPLAGESLDEVLDPTWAIEEIVRRYIGKPDFADLPRKYKTAISGLQDVAHEINDVAFIGVNHPEHGPGLDLWVGGGLSTNPMLAQRVGAWVPLGEVPEVWAAVTSVFRDYGYRRLRAKARLKFLIKDWGIAKFREVLETEYLKRPLIDGPAPEPVKHPIDHVGVQRLKNGLNAVGVAPIAGRVSGTILTAVADLMARAGSDRIRFTPYQKLVILDIPDALLDDLIAGLDALGLQSRPSHWRRNLMACSGIEFCKLSFAETRVRAQHLVPELERRLEDINSQLDVPITVNINGCPNSCARIQIADIGFKGQMIDDGHGGSVEGFQVHLGGHLGLDAGFGRKLRQHKVTSDELGDYIDRVVRNFVKHRSEGERFAQWVIRAEEDDLR.

Residues 1–22 (MTTARPAKARNEGQWALGHREP) are disordered. Residues 69 to 161 (YTQREQGYDG…DVGLQTTEAC (93 aa)) constitute a cross-link (3'-(S-cysteinyl)-tyrosine (Tyr-Cys)). Residues C417, C423, C463, and C467 each coordinate [4Fe-4S] cluster. Siroheme is bound at residue C467.

The protein belongs to the nitrite and sulfite reductase 4Fe-4S domain family. In terms of assembly, monomer. Siroheme serves as cofactor. Requires [4Fe-4S] cluster as cofactor.

The catalysed reaction is hydrogen sulfide + 6 oxidized [2Fe-2S]-[ferredoxin] + 3 H2O = sulfite + 6 reduced [2Fe-2S]-[ferredoxin] + 7 H(+). Its function is as follows. Catalyzes the reduction of sulfite to sulfide, a step in the biosynthesis of sulfur-containing amino acids and cofactors. This chain is Sulfite reductase [ferredoxin] (sir), found in Mycobacterium bovis (strain ATCC BAA-935 / AF2122/97).